Reading from the N-terminus, the 139-residue chain is D-ribose pyranase (139 aa).

Histidine 20 acts as the Proton donor in catalysis. Substrate-binding positions include aspartate 28, histidine 106, and 128–130 (YAN).

It belongs to the RbsD / FucU family. RbsD subfamily. In terms of assembly, homodecamer.

It is found in the cytoplasm. The enzyme catalyses beta-D-ribopyranose = beta-D-ribofuranose. The protein operates within carbohydrate metabolism; D-ribose degradation; D-ribose 5-phosphate from beta-D-ribopyranose: step 1/2. Functionally, catalyzes the interconversion of beta-pyran and beta-furan forms of D-ribose. The chain is D-ribose pyranase from Histophilus somni (strain 129Pt) (Haemophilus somnus).